We begin with the raw amino-acid sequence, 568 residues long: Urease subunit alpha (568 aa).

The Urease domain maps to 131–568 (GGMDAHIHFI…LPLAQRYFLY (438 aa)). Ni(2+)-binding residues include histidine 136, histidine 138, and lysine 219. The residue at position 219 (lysine 219) is an N6-carboxylysine. Histidine 221 is a binding site for substrate. The Ni(2+) site is built by histidine 248 and histidine 274. Residue histidine 322 is the Proton donor of the active site. Residue aspartate 362 coordinates Ni(2+).

It belongs to the metallo-dependent hydrolases superfamily. Urease alpha subunit family. As to quaternary structure, heterotrimer of UreA (gamma), UreB (beta) and UreC (alpha) subunits. Three heterotrimers associate to form the active enzyme. Ni cation serves as cofactor. Carboxylation allows a single lysine to coordinate two nickel ions.

It is found in the cytoplasm. It carries out the reaction urea + 2 H2O + H(+) = hydrogencarbonate + 2 NH4(+). It functions in the pathway nitrogen metabolism; urea degradation; CO(2) and NH(3) from urea (urease route): step 1/1. The protein is Urease subunit alpha of Cereibacter sphaeroides (strain ATCC 17023 / DSM 158 / JCM 6121 / CCUG 31486 / LMG 2827 / NBRC 12203 / NCIMB 8253 / ATH 2.4.1.) (Rhodobacter sphaeroides).